Here is a 139-residue protein sequence, read N- to C-terminus: ATP synthase epsilon chain (139 aa).

It belongs to the ATPase epsilon chain family. As to quaternary structure, F-type ATPases have 2 components, CF(1) - the catalytic core - and CF(0) - the membrane proton channel. CF(1) has five subunits: alpha(3), beta(3), gamma(1), delta(1), epsilon(1). CF(0) has three main subunits: a, b and c.

The protein localises to the cell inner membrane. Functionally, produces ATP from ADP in the presence of a proton gradient across the membrane. The sequence is that of ATP synthase epsilon chain from Pseudomonas entomophila (strain L48).